The following is a 369-amino-acid chain: S-(hydroxymethyl)glutathione dehydrogenase (369 aa).

Cys-40, His-62, Cys-92, Cys-95, Cys-98, Cys-106, and Cys-169 together coordinate Zn(2+).

It belongs to the zinc-containing alcohol dehydrogenase family. Class-III subfamily. Homodimer. Zn(2+) serves as cofactor.

It localises to the cytoplasm. It catalyses the reaction S-(hydroxymethyl)glutathione + NADP(+) = S-formylglutathione + NADPH + H(+). The enzyme catalyses S-(hydroxymethyl)glutathione + NAD(+) = S-formylglutathione + NADH + H(+). The catalysed reaction is a primary alcohol + NAD(+) = an aldehyde + NADH + H(+). It carries out the reaction a secondary alcohol + NAD(+) = a ketone + NADH + H(+). It catalyses the reaction S-nitrosoglutathione + NADH + H(+) = S-(hydroxysulfenamide)glutathione + NAD(+). Functionally, has high formaldehyde dehydrogenase activity in the presence of glutathione and catalyzes the oxidation of normal alcohols in a reaction that is not GSH-dependent. In addition, hemithiolacetals other than those formed from GSH, including omega-thiol fatty acids, also are substrates. Also acts as a S-nitroso-glutathione reductase by catalyzing the NADH-dependent reduction of S-nitrosoglutathione. The protein is S-(hydroxymethyl)glutathione dehydrogenase (frmA) of Escherichia coli (strain ATCC 8739 / DSM 1576 / NBRC 3972 / NCIMB 8545 / WDCM 00012 / Crooks).